A 779-amino-acid chain; its full sequence is MDDRHEGDHHDIEVEGGALHGFERKISGILDDGSVGFRQPLLARNRKNTTSQIAIVGANTCPIESLDYEIFENDFFKQDWRSRKKIEILQYTFLKWALAFLIGLATGLVGFLNNLGVENIAGFKLLLIGNLMLKEKYFQAFFAFAGCNLILATAAASLCAFIAPAAAGSGIPEVKAYLNGIDAYSILAPSTLFVKIFGSIFGVAAGFVVGKEGPMVHTGACIANLLGQGGSKKYRLTWKWLRFFKNDRDRRDLITCGAAAGVAAAFRAPVGGVLFALEEAASWWRNALLWRTFFTTAVVAVVLRSLIEFCRSGRCGLFGKGGLIMFDVNSGPVLYSTPDLLAIVFLGVIGGVLGSLYNYLVDKVLRTYSIINEKGPRFKIMLVMAVSILSSCCAFGLPWLSQCTPCPIGIEEGKCPSVGRSSIYKSFQCPPNHYNDLSSLLLNTNDDAIRNLFTSRSENEFHISTLAIFFVAVYCLGIITYGIAIPSGLFIPVILAGASYGRLVGRLLGPVSQLDVGLFSLLGAASFLGGTMRMTVSLCVILLELTNNLLMLPLVMLVLLISKTVADCFNRGVYDQIVTMKGLPYMEDHAEPYMRNLVAKDVVSGALISFSRVEKVGVIWQALKMTRHNGFPVIDEPPFTEASELCGIALRSHLLVLLQGKKFSKQRTTFGSQILRSCKARDFGKAGLGKGLKIEDLDLSEEEMEMYVDLHPITNTSPYTVLETLSLAKAAILFRQLGLRHLCVVPKTPGRPPIVGILTRHDFMPEHVLGLYPHIDPLK.

The residue at position 27 (serine 27) is a Phosphoserine. The next 12 membrane-spanning stretches (helical) occupy residues 92–112 (TFLKWALAFLIGLATGLVGFL), 142–162 (FAFAGCNLILATAAASLCAFI), 190–210 (STLFVKIFGSIFGVAAGFVVG), 215–235 (MVHTGACIANLLGQGGSKKYR), 257–277 (GAAAGVAAAFRAPVGGVLFAL), 287–307 (ALLWRTFFTTAVVAVVLRSLI), 341–361 (LAIVFLGVIGGVLGSLYNYLV), 380–400 (IMLVMAVSILSSCCAFGLPWL), 466–486 (LAIFFVAVYCLGIITYGIAIP), 488–508 (GLFIPVILAGASYGRLVGRLL), 520–540 (SLLGAASFLGGTMRMTVSLCV), and 541–561 (ILLELTNNLLMLPLVMLVLLI). In terms of domain architecture, CBS 1 spans 601-659 (DVVSGALISFSRVEKVGVIWQALKMTRHNGFPVIDEPPFTEASELCGIALRSHLLVLLQ). Residue serine 672 is modified to Phosphoserine. The CBS 2 domain occupies 713–777 (ITNTSPYTVL…VLGLYPHIDP (65 aa)). Residues 741-761 (HLCVVPKTPGRPPIVGILTRH) traverse the membrane as a helical segment.

It belongs to the chloride channel (TC 2.A.49) family. As to quaternary structure, homodimer. Interacts with PP2A5. As to expression, broadly expressed in the plant.

It localises to the membrane. In terms of biological role, voltage-gated chloride channel. This Arabidopsis thaliana (Mouse-ear cress) protein is Chloride channel protein CLC-c (CLC-C).